We begin with the raw amino-acid sequence, 1007 residues long: Lysosomal alpha-mannosidase (1007 aa).

A signal peptide spans 1–47; sequence MGASVLPLGLGAGDCQSSSGRRMSACLPRTALSFLLSLLLATPGARA. 2 cysteine pairs are disulfide-bonded: C53–C356 and C266–C271. Residues H70 and D72 each contribute to the Zn(2+) site. N131 carries N-linked (GlcNAc...) asparagine glycosylation. D194 contacts Zn(2+). D194 serves as the catalytic Nucleophile. Residues N308, N343, and N365 are each glycosylated (N-linked (GlcNAc...) asparagine). 2 disulfide bridges follow: C410/C470 and C491/C499. H444 serves as a coordination point for Zn(2+). 6 N-linked (GlcNAc...) asparagine glycosylation sites follow: N495, N540, N639, N686, N760, and N927.

The protein belongs to the glycosyl hydrolase 38 family. Requires Zn(2+) as cofactor.

Its subcellular location is the lysosome. The enzyme catalyses Hydrolysis of terminal, non-reducing alpha-D-mannose residues in alpha-D-mannosides.. Functionally, necessary for the catabolism of N-linked carbohydrates released during glycoprotein turnover. This Cavia porcellus (Guinea pig) protein is Lysosomal alpha-mannosidase (MAN2B1).